The following is a 388-amino-acid chain: Flap endonuclease 1 (388 aa).

The N-domain stretch occupies residues 1–104 (MGILGLSKLI…GELAKRAERR (104 aa)). Asp-34 serves as a coordination point for Mg(2+). 2 residues coordinate DNA: Arg-47 and Arg-70. Asp-86, Glu-158, Glu-160, Asp-179, and Asp-181 together coordinate Mg(2+). The interval 122-253 (EIEKFNRRLV…KRAIELINNY (132 aa)) is I-domain. Glu-158 contacts DNA. DNA contacts are provided by Gly-231 and Asp-233. Asp-233 provides a ligand contact to Mg(2+). Positions 336 to 344 (TQVRLDSFF) are interaction with PCNA. Residues 343–388 (FFKTLPSTPSATNAAKRKAEEAKKSANNKKAKTSGGGGGGRGRRPK) form a disordered region.

This sequence belongs to the XPG/RAD2 endonuclease family. FEN1 subfamily. Interacts with PCNA. Three molecules of FEN1 bind to one PCNA trimer with each molecule binding to one PCNA monomer. PCNA stimulates the nuclease activity without altering cleavage specificity. The cofactor is Mg(2+). Phosphorylated. Phosphorylation upon DNA damage induces relocalization to the nuclear plasma.

The protein resides in the nucleus. The protein localises to the nucleolus. It localises to the nucleoplasm. It is found in the mitochondrion. Functionally, structure-specific nuclease with 5'-flap endonuclease and 5'-3' exonuclease activities involved in DNA replication and repair. During DNA replication, cleaves the 5'-overhanging flap structure that is generated by displacement synthesis when DNA polymerase encounters the 5'-end of a downstream Okazaki fragment. It enters the flap from the 5'-end and then tracks to cleave the flap base, leaving a nick for ligation. Also involved in the long patch base excision repair (LP-BER) pathway, by cleaving within the apurinic/apyrimidinic (AP) site-terminated flap. Acts as a genome stabilization factor that prevents flaps from equilibrating into structures that lead to duplications and deletions. Also possesses 5'-3' exonuclease activity on nicked or gapped double-stranded DNA, and exhibits RNase H activity. Also involved in replication and repair of rDNA and in repairing mitochondrial DNA. The protein is Flap endonuclease 1 of Drosophila ananassae (Fruit fly).